A 393-amino-acid chain; its full sequence is Putative bacilysin exporter BacE (393 aa).

The next 10 membrane-spanning stretches (helical) occupy residues 11-31, 43-63, 69-89, 92-112, 133-155, 160-177, 215-235, 244-264, 287-307, and 353-373; these read LLFG…ALLI, SGVI…GVLV, VKIM…LTFL, GEYP…GVFF, LFAK…FLLG, LAVA…FFIS, MFTM…FPIV, IGNF…AALV, ALFL…LFFI, and IVDA…LFLH.

The protein belongs to the major facilitator superfamily.

The protein resides in the cell membrane. In terms of biological role, part of the bacilysin biosynthesis operon. May be involved in self-resistance to bacilysin by permitting efflux of this antibiotic. This is Putative bacilysin exporter BacE (bacE) from Bacillus amyloliquefaciens (Bacillus velezensis).